Here is a 604-residue protein sequence, read N- to C-terminus: Terpenoid synthase 30 (604 aa).

Mg(2+) contacts are provided by asparagine 356, aspartate 360, asparagine 500, threonine 504, and glutamate 508. A DDXXD motif; degenerate motif is present at residues 356 to 360 (NDVCD).

This sequence belongs to the terpene synthase family. Tpsa subfamily. The cofactor is Mg(2+). Requires Mn(2+) as cofactor.

The protein localises to the cytoplasm. The protein operates within secondary metabolite biosynthesis; terpenoid biosynthesis. Involved in terpene biosynthesis in roots. Possesses sesquiterpene (C15) synthase activity and diterpene (C20) synthase activity in vitro. The sequence is that of Terpenoid synthase 30 from Arabidopsis thaliana (Mouse-ear cress).